The following is a 227-amino-acid chain: Octanoyltransferase (227 aa).

In terms of domain architecture, BPL/LPL catalytic spans 31–209 (ANTIDEIWLV…VFLSLLGGTN (179 aa)). Residues 71–78 (RGGKITYH), 139–141 (SIG), and 152–154 (GLA) contribute to the substrate site. Cys-170 (acyl-thioester intermediate) is an active-site residue.

This sequence belongs to the LipB family.

It localises to the cytoplasm. It catalyses the reaction octanoyl-[ACP] + L-lysyl-[protein] = N(6)-octanoyl-L-lysyl-[protein] + holo-[ACP] + H(+). It functions in the pathway protein modification; protein lipoylation via endogenous pathway; protein N(6)-(lipoyl)lysine from octanoyl-[acyl-carrier-protein]: step 1/2. Functionally, catalyzes the transfer of endogenously produced octanoic acid from octanoyl-acyl-carrier-protein onto the lipoyl domains of lipoate-dependent enzymes. Lipoyl-ACP can also act as a substrate although octanoyl-ACP is likely to be the physiological substrate. This Baumannia cicadellinicola subsp. Homalodisca coagulata protein is Octanoyltransferase.